Consider the following 391-residue polypeptide: Yellow-related salivary protein ASP4 (391 aa).

The N-terminal stretch at 1–18 is a signal peptide; that stretch reads MKIFLCIIAVVSLQGVVA. N29 carries an N-linked (GlcNAc...) asparagine glycan.

Belongs to the major royal jelly protein family. As to expression, female salivary gland (at protein level).

It is found in the secreted. Its function is as follows. Probably modulates blood feeding of sand flies on vertebrate species by binding and sequestering different mediators involved in the host response. Binds biogenic amines. Binds serotonin and dopamine with high affinity. Binds adrenaline, octopamine and adrenaline with medium affinity. Binds histamine with low affinity. The sequence is that of Yellow-related salivary protein ASP4 from Phlebotomus orientalis (Phlebotomine sand fly).